A 278-amino-acid polypeptide reads, in one-letter code: Betaine--homocysteine S-methyltransferase 1 (278 aa).

One can recognise a Hcy-binding domain in the interval 11-278 (KGILERLNSG…FGLEPRVATR (268 aa)). An N6-succinyllysine mark is found at K40, K93, and K98. C217 lines the Zn(2+) pocket. An N6-succinyllysine mark is found at K232 and K241.

As to quaternary structure, homotetramer. Zn(2+) is required as a cofactor. As to expression, found exclusively in liver and kidney.

It localises to the cytoplasm. The protein resides in the cytosol. The protein localises to the nucleus. The catalysed reaction is L-homocysteine + glycine betaine = N,N-dimethylglycine + L-methionine. It participates in amine and polyamine degradation; betaine degradation; sarcosine from betaine: step 1/2. The protein operates within amino-acid biosynthesis; L-methionine biosynthesis via de novo pathway; L-methionine from L-homocysteine (BhmT route): step 1/1. Inhibited by dimethylglycine and methylthioacetate. In terms of biological role, involved in the regulation of homocysteine metabolism. Converts betaine and homocysteine to dimethylglycine and methionine, respectively. This reaction is also required for the irreversible oxidation of choline. The chain is Betaine--homocysteine S-methyltransferase 1 from Sus scrofa (Pig).